Consider the following 113-residue polypeptide: Ig kappa chain V-II region 7S34.1 (113 aa).

The framework-1 stretch occupies residues 1–23; the sequence is DIVMTQTAPSALVTPGESVSISC. The cysteines at positions 23 and 93 are disulfide-linked. The interval 24–39 is complementarity-determining-1; the sequence is RSSKSLLHSNGNTYLY. Residues 40-54 form a framework-2 region; sequence WFLQRPGQCPQLLIY. The tract at residues 55–61 is complementarity-determining-2; sequence RMSNLAS. The framework-3 stretch occupies residues 62 to 93; that stretch reads GVPDRFSGSGSGTAFTLRISRVEAEDVGVYYC. The complementarity-determining-3 stretch occupies residues 94–102; that stretch reads MQQREYPYT. The tract at residues 103–112 is framework-4; sequence FGGGTKLEIK.

The chain is Ig kappa chain V-II region 7S34.1 from Mus musculus (Mouse).